The primary structure comprises 162 residues: UPF0102 protein Bpet0439 (162 aa).

Residues 15 to 52 (QAQQRQMKRRRAAAHRAARGPAPARAPRASPTQRTGTA) are disordered. A compositionally biased stretch (basic residues) spans 20–32 (QMKRRRAAAHRAA). Low complexity predominate over residues 33-48 (RGPAPARAPRASPTQR).

The protein belongs to the UPF0102 family.

This chain is UPF0102 protein Bpet0439, found in Bordetella petrii (strain ATCC BAA-461 / DSM 12804 / CCUG 43448).